We begin with the raw amino-acid sequence, 335 residues long: MGRLILEHTLQGHKGRIWGVAWHPKGNTFASCGEDKAIRIWSLSGNSWSTKTILSDGHKRTIREIRWSPCGQYLASASFDATTAIWSKSSGEFECNATLEGHENEVKSVSWSKSGGLLATCSRDKSVWIWEVAGDDEFECAAVLNPHTQDVKRVVWHPTKEILASASYDNTIKMFAESALDSDWDCTATLSSHTSTVWSIDFDADGERLVSCSDDTTLKIWRAYHPGNDAGVATPDKQTVWKCVCTLSGQHSRAIYDVSWCKLTGLIATACGDDGIRIFKESSDSKRDEPTFEQVTAEESAHEQDVNSVEWNPVMAGQLISCSDDGTIKIWKMLD.

WD repeat units follow at residues 12 to 51, 57 to 96, 101 to 140, 146 to 185, 192 to 231, 250 to 289, and 301 to 335; these read GHKG…WSTK, GHKR…FECN, GHEN…EFEC, PHTQ…SDWD, SHTS…NDAG, QHSR…KRDE, and AHEQ…KMLD.

It belongs to the WD repeat CIA1 family.

Essential component of the cytosolic iron-sulfur (Fe/S) protein assembly machinery. Required for the maturation of extramitochondrial Fe/S proteins. This is Probable cytosolic iron-sulfur protein assembly protein Ciao1 from Drosophila willistoni (Fruit fly).